The sequence spans 209 residues: Uracil phosphoribosyltransferase (209 aa).

Residues arginine 79, arginine 104, and 131 to 139 (DPMLATGGS) contribute to the 5-phospho-alpha-D-ribose 1-diphosphate site. Uracil-binding positions include isoleucine 194 and 199–201 (GDA). Aspartate 200 serves as a coordination point for 5-phospho-alpha-D-ribose 1-diphosphate.

Belongs to the UPRTase family. Mg(2+) is required as a cofactor.

It carries out the reaction UMP + diphosphate = 5-phospho-alpha-D-ribose 1-diphosphate + uracil. It participates in pyrimidine metabolism; UMP biosynthesis via salvage pathway; UMP from uracil: step 1/1. Its activity is regulated as follows. Allosterically activated by GTP. Catalyzes the conversion of uracil and 5-phospho-alpha-D-ribose 1-diphosphate (PRPP) to UMP and diphosphate. This chain is Uracil phosphoribosyltransferase, found in Symbiobacterium thermophilum (strain DSM 24528 / JCM 14929 / IAM 14863 / T).